Reading from the N-terminus, the 195-residue chain is GTP-dependent dephospho-CoA kinase (195 aa).

GTP-binding residues include Asp49, Val50, Asp68, Glu127, and Asp150.

It belongs to the GTP-dependent DPCK family.

It carries out the reaction 3'-dephospho-CoA + GTP = GDP + CoA + H(+). Its pathway is cofactor biosynthesis; coenzyme A biosynthesis. In terms of biological role, catalyzes the GTP-dependent phosphorylation of the 3'-hydroxyl group of dephosphocoenzyme A to form coenzyme A (CoA). The protein is GTP-dependent dephospho-CoA kinase of Methanosarcina acetivorans (strain ATCC 35395 / DSM 2834 / JCM 12185 / C2A).